Consider the following 48-residue polypeptide: Light-harvesting protein B-870 beta chain (48 aa).

Residues 2 to 21 (AERKGSISGLTDDEAQEFHK) lie on the Cytoplasmic side of the membrane. A bacteriochlorophyll contacts are provided by H20 and H38. Residues 22–44 (FWVQGFVGFTAVAVVAHFLVWVW) traverse the membrane as a helical segment. Topologically, residues 45–48 (RPWL) are periplasmic.

An alpha/beta heterodimer. The core complex is formed by different alpha and beta chains, binding bacteriochlorophyll molecules, and arranged most probably in tetrameric structures disposed around the reaction center. The non-pigmented gamma chains may constitute additional components.

Its subcellular location is the cell inner membrane. Antenna complexes are light-harvesting systems, which transfer the excitation energy to the reaction centers. The sequence is that of Light-harvesting protein B-870 beta chain (pufB) from Rubrivivax gelatinosus (Rhodocyclus gelatinosus).